Consider the following 193-residue polypeptide: dCTP deaminase (193 aa).

Residues 110-115 (RSSLAR), Asp-128, 136-138 (VLE), Tyr-171, Lys-178, and Gln-182 each bind dCTP. The active-site Proton donor/acceptor is the Glu-138. The segment at 168–193 (DRPYNRRQDAKYKNQQGAVSSRIDED) is disordered. Over residues 170–179 (PYNRRQDAKY) the composition is skewed to basic and acidic residues.

Belongs to the dCTP deaminase family. Homotrimer.

The enzyme catalyses dCTP + H2O + H(+) = dUTP + NH4(+). It functions in the pathway pyrimidine metabolism; dUMP biosynthesis; dUMP from dCTP (dUTP route): step 1/2. Catalyzes the deamination of dCTP to dUTP. The polypeptide is dCTP deaminase (Photorhabdus laumondii subsp. laumondii (strain DSM 15139 / CIP 105565 / TT01) (Photorhabdus luminescens subsp. laumondii)).